A 291-amino-acid polypeptide reads, in one-letter code: Protease HtpX homolog (291 aa).

Helical transmembrane passes span 4-24 (IVLF…TMRL) and 39-59 (TSLL…SLAI). H145 serves as a coordination point for Zn(2+). E146 is an active-site residue. H149 contacts Zn(2+). 2 consecutive transmembrane segments (helical) span residues 156–176 (VTLA…SRII) and 195–215 (FFVT…IIVM). Residue E222 coordinates Zn(2+).

Belongs to the peptidase M48B family. The cofactor is Zn(2+).

It localises to the cell inner membrane. This chain is Protease HtpX homolog, found in Thiobacillus denitrificans (strain ATCC 25259 / T1).